The sequence spans 246 residues: Complement C1q subcomponent subunit C (246 aa).

The N-terminal stretch at 1–29 (MVVGPSCQPPCGLCLLLLFLLALPLRSQA) is a signal peptide. Residues 32–113 (GCYGIPGMPG…GPPGEPGVEG (82 aa)) enclose the Collagen-like domain. A 4-hydroxyproline mark is found at Pro37, Pro40, Pro43, Pro46, and Pro64. The interval 44-116 (GAPGKDGHDG…GEPGVEGRYK (73 aa)) is disordered. At Lys76 the chain carries 5-hydroxylysine. The O-linked (Gal...) hydroxylysine glycan is linked to Lys76. 4-hydroxyproline occurs at positions 82, 97, 100, and 106. Residues 99–108 (DPGPRGPPGE) show a composition bias toward pro residues. Residues 116–246 (KQKHQSVFTV…VFSGFLLFPD (131 aa)) form the C1q domain. A disulfide bridge links Cys180 with Cys194.

In terms of assembly, core component of the complement C1 complex, a calcium-dependent complex composed of 1 molecule of the C1Q subcomplex, 2 molecules of C1R and 2 molecules of C1S. The C1Q subcomplex is composed 18 subunits: 3 chains of C1QA, C1QB, and C1QC trimerize to form 6 collagen-like triple helices connected to six globular ligand-recognition modules (C1q domain). In terms of processing, O-linked glycans consist of Glc-Gal disaccharides bound to the oxygen atom of post-translationally added hydroxyl groups.

It is found in the secreted. Its subcellular location is the cell surface. With respect to regulation, the C1Q subcomplex is inhibited by sulfated molecules, such as triterpenoid sulfates, heparan sulfate, or chondroitin sulfates. In terms of biological role, core component of the complement C1 complex, a multiprotein complex that initiates the classical pathway of the complement system, a cascade of proteins that leads to phagocytosis and breakdown of pathogens and signaling that strengthens the adaptive immune system. The classical complement pathway is initiated by the C1Q subcomplex of the C1 complex, which specifically binds IgG or IgM immunoglobulins complexed with antigens, forming antigen-antibody complexes on the surface of pathogens: C1QA, together with C1QB and C1QC, specifically recognizes and binds the Fc regions of IgG or IgM via its C1q domain. Immunoglobulin-binding activates the proenzyme C1R, which cleaves C1S, initiating the proteolytic cascade of the complement system. The C1Q subcomplex is activated by a hexamer of IgG complexed with antigens, while it is activated by a pentameric IgM. The C1Q subcomplex also recognizes and binds phosphatidylserine exposed on the surface of cells undergoing programmed cell death, possibly promoting activation of the complement system. The chain is Complement C1q subcomponent subunit C from Mus musculus (Mouse).